The chain runs to 153 residues: Histone H2B.10 (153 aa).

2 stretches are compositionally biased toward basic and acidic residues: residues 1–28 and 36–53; these read MAPK…EKAP and EKRL…EGKK. Residues 1–61 are disordered; it reads MAPKAEKKPA…KKAGRKKAKK (61 aa). Lysine 7 and lysine 37 each carry N6-acetyllysine. Residue lysine 149 forms a Glycyl lysine isopeptide (Lys-Gly) (interchain with G-Cter in ubiquitin) linkage.

This sequence belongs to the histone H2B family. The nucleosome is a histone octamer containing two molecules each of H2A, H2B, H3 and H4 assembled in one H3-H4 heterotetramer and two H2A-H2B heterodimers. The octamer wraps approximately 147 bp of DNA. In terms of processing, can be acetylated to form H2BK6ac and H2BK33ac. Post-translationally, monoubiquitinated by BRE1 to form H2BK143ub1 and deubiquitinated by UBP26. Required for heterochromatic histone H3 di- and trimethylation at H3K4me. May give a specific tag for epigenetic transcriptional activation.

The protein localises to the nucleus. It is found in the chromosome. Core component of nucleosome. Nucleosomes wrap and compact DNA into chromatin, limiting DNA accessibility to the cellular machineries which require DNA as a template. Histones thereby play a central role in transcription regulation, DNA repair, DNA replication and chromosomal stability. DNA accessibility is regulated via a complex set of post-translational modifications of histones, also called histone code, and nucleosome remodeling. This chain is Histone H2B.10 (H2B.10), found in Oryza sativa subsp. indica (Rice).